The primary structure comprises 334 residues: Fructose-1,6-bisphosphatase class 1 (334 aa).

Mg(2+) is bound by residues Glu91, Asp113, Leu115, and Asp116. Substrate-binding positions include 116-119, Asn208, and Lys274; that span reads DGSS. Glu280 lines the Mg(2+) pocket.

The protein belongs to the FBPase class 1 family. As to quaternary structure, homotetramer. Mg(2+) serves as cofactor.

It is found in the cytoplasm. It carries out the reaction beta-D-fructose 1,6-bisphosphate + H2O = beta-D-fructose 6-phosphate + phosphate. Its pathway is carbohydrate biosynthesis; gluconeogenesis. The protein is Fructose-1,6-bisphosphatase class 1 of Janthinobacterium sp. (strain Marseille) (Minibacterium massiliensis).